A 347-amino-acid polypeptide reads, in one-letter code: NADH-ubiquinone oxidoreductase chain 2 (347 aa).

Transmembrane regions (helical) follow at residues 5-22, 26-45, 60-80, 96-116, 122-142, 153-173, 178-198, 200-220, 237-257, 274-294, and 325-345; these read ILIT…IVLF, WFMI…PILM, FLTQ…NLLC, TMIT…FWVP, ISLS…LSIL, LLLM…LNQT, ILAY…VYNP, LAIL…MLFM, FPLM…LPPL, DMII…YFYT, and LLAP…MLAA.

The protein belongs to the complex I subunit 2 family. Core subunit of respiratory chain NADH dehydrogenase (Complex I) which is composed of 45 different subunits. Interacts with TMEM242.

It localises to the mitochondrion inner membrane. The enzyme catalyses a ubiquinone + NADH + 5 H(+)(in) = a ubiquinol + NAD(+) + 4 H(+)(out). In terms of biological role, core subunit of the mitochondrial membrane respiratory chain NADH dehydrogenase (Complex I) which catalyzes electron transfer from NADH through the respiratory chain, using ubiquinone as an electron acceptor. Essential for the catalytic activity and assembly of complex I. The polypeptide is NADH-ubiquinone oxidoreductase chain 2 (Ailuropoda melanoleuca (Giant panda)).